The primary structure comprises 553 residues: T-complex protein 1 subunit eta (553 aa).

Gly-41 is an ADP binding site. An ATP-binding site is contributed by Gly-41. Residue Asp-92 participates in Mg(2+) binding. 6 residues coordinate ADP: Gly-93, Thr-94, Thr-95, Ser-96, Ser-164, and Ser-165. Gly-93 provides a ligand contact to ATP. Ser-96 provides a ligand contact to ATP. ATP contacts are provided by Arg-398 and Gly-409. Residues Gly-409, Glu-494, and Arg-499 each coordinate ADP. Arg-499 lines the ATP pocket. Residues 523 to 553 form a disordered region; that stretch reads PRSTVDAPPGGRGRGRGQTPQPLRPRSVALS. The segment covering 539 to 553 has biased composition (low complexity); it reads GQTPQPLRPRSVALS.

Component of the chaperonin-containing T-complex (TRiC), a hexadecamer composed of two identical back-to-back stacked rings enclosing a protein folding chamber. Each ring is made up of eight different subunits: TCP1/CCT1, CCT2, CCT3, CCT4, CCT5, CCT6A/CCT6, CCT7, CCT8.

Its subcellular location is the cytoplasm. The enzyme catalyses ATP + H2O = ADP + phosphate + H(+). In terms of biological role, component of the chaperonin-containing T-complex (TRiC), a molecular chaperone complex that assists the folding of actin, tubulin and other proteins upon ATP hydrolysis. In Gallus gallus (Chicken), this protein is T-complex protein 1 subunit eta.